The chain runs to 47 residues: Light-harvesting protein B800/850/890 alpha-2 chain (47 aa).

The Cytoplasmic portion of the chain corresponds to 1 to 12 (MWRMWKILDYRR). Residues 13-33 (TVVLAHVGMAVLALLIHFILL) form a helical membrane-spanning segment. Histidine 29 provides a ligand contact to a bacteriochlorophyll. The Periplasmic segment spans residues 34-47 (STESFNWLEGNPYG).

Belongs to the antenna complex alpha subunit family. In terms of assembly, the core complex is formed by different alpha and beta chains, binding bacteriochlorophyll molecules, and arranged most probably in tetrameric structures disposed around the reaction center. The non-pigmented gamma chains may constitute additional components.

It is found in the cell inner membrane. In terms of biological role, antenna complexes are light-harvesting systems, which transfer the excitation energy to the reaction centers. The protein is Light-harvesting protein B800/850/890 alpha-2 chain of Halorhodospira halophila (strain DSM 244 / SL1) (Ectothiorhodospira halophila (strain DSM 244 / SL1)).